The sequence spans 346 residues: Holliday junction branch migration complex subunit RuvB (346 aa).

The tract at residues Met1 to Tyr182 is large ATPase domain (RuvB-L). Positions 21, 22, 63, 66, 67, 68, 172, 182, and 219 each coordinate ATP. A Mg(2+)-binding site is contributed by Thr67. Residues Thr183–Glu253 form a small ATPAse domain (RuvB-S) region. The interval Glu256 to Gly346 is head domain (RuvB-H). Residues Arg292, Arg311, and Arg316 each contribute to the DNA site.

This sequence belongs to the RuvB family. In terms of assembly, homohexamer. Forms an RuvA(8)-RuvB(12)-Holliday junction (HJ) complex. HJ DNA is sandwiched between 2 RuvA tetramers; dsDNA enters through RuvA and exits via RuvB. An RuvB hexamer assembles on each DNA strand where it exits the tetramer. Each RuvB hexamer is contacted by two RuvA subunits (via domain III) on 2 adjacent RuvB subunits; this complex drives branch migration. In the full resolvosome a probable DNA-RuvA(4)-RuvB(12)-RuvC(2) complex forms which resolves the HJ.

The protein localises to the cytoplasm. It carries out the reaction ATP + H2O = ADP + phosphate + H(+). Its function is as follows. The RuvA-RuvB-RuvC complex processes Holliday junction (HJ) DNA during genetic recombination and DNA repair, while the RuvA-RuvB complex plays an important role in the rescue of blocked DNA replication forks via replication fork reversal (RFR). RuvA specifically binds to HJ cruciform DNA, conferring on it an open structure. The RuvB hexamer acts as an ATP-dependent pump, pulling dsDNA into and through the RuvAB complex. RuvB forms 2 homohexamers on either side of HJ DNA bound by 1 or 2 RuvA tetramers; 4 subunits per hexamer contact DNA at a time. Coordinated motions by a converter formed by DNA-disengaged RuvB subunits stimulates ATP hydrolysis and nucleotide exchange. Immobilization of the converter enables RuvB to convert the ATP-contained energy into a lever motion, pulling 2 nucleotides of DNA out of the RuvA tetramer per ATP hydrolyzed, thus driving DNA branch migration. The RuvB motors rotate together with the DNA substrate, which together with the progressing nucleotide cycle form the mechanistic basis for DNA recombination by continuous HJ branch migration. Branch migration allows RuvC to scan DNA until it finds its consensus sequence, where it cleaves and resolves cruciform DNA. This Caulobacter vibrioides (strain ATCC 19089 / CIP 103742 / CB 15) (Caulobacter crescentus) protein is Holliday junction branch migration complex subunit RuvB.